Reading from the N-terminus, the 896-residue chain is Protein translocase subunit SecA (896 aa).

Residues Q87, 105–109 (GEGKT), and D507 contribute to the ATP site. The interval 853 to 879 (ESLSENDEASETQTFRRQEKKIGRNDP) is disordered. Over residues 866 to 876 (TFRRQEKKIGR) the composition is skewed to basic and acidic residues. 4 residues coordinate Zn(2+): C880, C882, C891, and H892.

It belongs to the SecA family. As to quaternary structure, monomer and homodimer. Part of the essential Sec protein translocation apparatus which comprises SecA, SecYEG and auxiliary proteins SecDF-YajC and YidC. It depends on Zn(2+) as a cofactor.

Its subcellular location is the cell inner membrane. It localises to the cytoplasm. The enzyme catalyses ATP + H2O + cellular proteinSide 1 = ADP + phosphate + cellular proteinSide 2.. Part of the Sec protein translocase complex. Interacts with the SecYEG preprotein conducting channel. Has a central role in coupling the hydrolysis of ATP to the transfer of proteins into and across the cell membrane, serving both as a receptor for the preprotein-SecB complex and as an ATP-driven molecular motor driving the stepwise translocation of polypeptide chains across the membrane. The chain is Protein translocase subunit SecA from Legionella pneumophila subsp. pneumophila (strain Philadelphia 1 / ATCC 33152 / DSM 7513).